The primary structure comprises 274 residues: 2,3,4,5-tetrahydropyridine-2,6-dicarboxylate N-succinyltransferase (274 aa).

Residues arginine 104 and aspartate 141 each coordinate substrate.

Belongs to the transferase hexapeptide repeat family. In terms of assembly, homotrimer.

The protein resides in the cytoplasm. It carries out the reaction (S)-2,3,4,5-tetrahydrodipicolinate + succinyl-CoA + H2O = (S)-2-succinylamino-6-oxoheptanedioate + CoA. Its pathway is amino-acid biosynthesis; L-lysine biosynthesis via DAP pathway; LL-2,6-diaminopimelate from (S)-tetrahydrodipicolinate (succinylase route): step 1/3. The chain is 2,3,4,5-tetrahydropyridine-2,6-dicarboxylate N-succinyltransferase from Shewanella sp. (strain ANA-3).